The primary structure comprises 896 residues: Lipoxygenase 2, chloroplastic (896 aa).

Residues Met-1–Arg-56 constitute a chloroplast transit peptide. The PLAT domain occupies Ile-79 to Ser-199. The interval Gly-175–Gly-232 is EIF4E2 binding. Positions Ser-202–Ile-896 constitute a Lipoxygenase domain. Fe cation contacts are provided by His-554, His-559, His-746, Asn-750, and Ile-896.

This sequence belongs to the lipoxygenase family. In terms of assembly, interacts with EIF4E2. Fe cation serves as cofactor. In terms of tissue distribution, in leaves and inflorescences but not abundant in seeds, roots and stems.

It is found in the plastid. Its subcellular location is the chloroplast. It localises to the cytoplasm. The enzyme catalyses (9Z,12Z)-octadecadienoate + O2 = (13S)-hydroperoxy-(9Z,11E)-octadecadienoate. It catalyses the reaction (9Z,12Z,15Z)-octadecatrienoate + O2 = (13S)-hydroperoxy-(9Z,11E,15Z)-octadecatrienoate. It functions in the pathway lipid metabolism; oxylipin biosynthesis. 13S-lipoxygenase that can use linolenic acid as substrates. Plant lipoxygenases may be involved in a number of diverse aspects of plant physiology including growth and development, pest resistance, and senescence or responses to wounding. Catalyzes the hydroperoxidation of lipids containing a cis,cis-1,4-pentadiene structure. Required for the wound-induced synthesis of jasmonic acid (JA) in leaves. The polypeptide is Lipoxygenase 2, chloroplastic (LOX2) (Arabidopsis thaliana (Mouse-ear cress)).